Here is a 60-residue protein sequence, read N- to C-terminus: MDPCECSKTGKCSCGGSCTCTNCSCTSCKKSCCPCCPSGCSKCASGCVCKGKTCDTSCCQ.

Residues 1 to 28 (MDPCECSKTGKCSCGGSCTCTNCSCTSC) form a beta region. Residues Cys-4, Cys-6, Cys-12, Cys-14, Cys-18, Cys-20, Cys-23, Cys-25, Cys-28, Cys-32, Cys-33, Cys-35, Cys-36, Cys-40, Cys-43, Cys-47, Cys-49, Cys-54, Cys-58, and Cys-59 each coordinate a divalent metal cation. The segment at 29–60 (KKSCCPCCPSGCSKCASGCVCKGKTCDTSCCQ) is alpha.

This sequence belongs to the metallothionein superfamily. Type 1 family.

Functionally, metallothioneins have a high content of cysteine residues that bind various heavy metals. This Chelon auratus (Golden grey mullet) protein is Metallothionein (mt).